The primary structure comprises 3130 residues: DNA polymerase zeta catalytic subunit (3130 aa).

6 disordered regions span residues 263 to 295 (AIWE…VPAT), 425 to 457 (GYRG…NEPQ), 487 to 510 (LCRN…MEWS), 524 to 548 (LDGT…SSVI), 697 to 728 (PNEN…EKGN), and 817 to 871 (VTYK…EKDN). Over residues 286–295 (SQDHRFVPAT) the composition is skewed to basic and acidic residues. Residues 497-509 (EDDDSSSGEEMEW) show a composition bias toward acidic residues. Polar residues-rich tracts occupy residues 533–548 (DNPL…SSVI) and 699–728 (ENTL…EKGN). Positions 828-838 (SRLKLNKRKLA) are enriched in basic residues. A compositionally biased stretch (low complexity) spans 842 to 854 (ETSTKSSETGSTK). A compositionally biased stretch (polar residues) spans 855–866 (DNFIQNNPCNSN). A Phosphoserine modification is found at S1030. 3 disordered regions span residues 1035–1095 (YPIY…YNAE), 1162–1231 (SRIG…DEKI), and 1537–1600 (RQQK…KLLK). T1041 carries the phosphothreonine modification. Composition is skewed to basic residues over residues 1043-1061 (KKSH…KTGK) and 1166-1179 (KTSR…KSKA). The span at 1213 to 1231 (KTNEKGTSRKHTTLKDEKI) shows a compositional bias: basic and acidic residues. The segment covering 1540-1565 (KAQNANTTQDPLSNKHQPNKNISGSL) has biased composition (polar residues). Residues 1570–1589 (ANKRTRSVTSPRKPRTPRST) are compositionally biased toward basic residues. The span at 1590 to 1600 (KQKEKIPKLLK) shows a compositional bias: basic and acidic residues. Phosphoserine is present on S1724. Disordered regions lie at residues 1845–1882 (NDML…KPLM), 1962–1984 (NPRP…SNSP), 2017–2050 (ERSK…PVVP), 2080–2150 (PTTG…SPVE), and 2216–2236 (APGL…NKKG). Positions 1847 to 1898 (MLTPTPDSSPRSTSSPSQSKNGSFTPRTANILKPLMSPPSREEIMATLLDHD) are mediates interaction with MAD2L2. The segment covering 1849 to 1865 (TPTPDSSPRSTSSPSQS) has biased composition (low complexity). S1967 carries the phosphoserine modification. A compositionally biased stretch (polar residues) spans 2080 to 2092 (PTTGCSQTASESQ). Residues 2113-2122 (YYISYSSPDS) show a composition bias toward low complexity. Polar residues predominate over residues 2221–2236 (PLSTEPKTQKLSNKKG). The Zn(2+) site is built by C3042, C3045, C3054, and C3057. The CysA-type zinc finger occupies 3042 to 3057 (CPVCDDLTQHGICSKC). [4Fe-4S] cluster contacts are provided by C3086, C3089, C3099, and C3104. Residues 3086–3104 (CKNCTGCFDRHIPCVSLNC) carry the CysB motif motif.

Belongs to the DNA polymerase type-B family. In terms of assembly, heterodimer with MAD2L2. This dimer forms the minimal DNA polymerase zeta complex (Pol-zeta2), with REV3L bearing DNA polymerase catalytic activity, although its activity is very low in this context. Component of the tetrameric Pol-zeta complex (Pol-zeta4), which consists of REV3L, MAD2L2, POLD2 and POLD3; Pol-zeta4 is the fully active form of DNA polymerase zeta. It depends on [4Fe-4S] cluster as a cofactor. In terms of tissue distribution, ubiquitously expressed.

The protein resides in the nucleus. It carries out the reaction DNA(n) + a 2'-deoxyribonucleoside 5'-triphosphate = DNA(n+1) + diphosphate. Its function is as follows. Catalytic subunit of the DNA polymerase zeta complex, an error-prone polymerase specialized in translesion DNA synthesis (TLS). Lacks an intrinsic 3'-5' exonuclease activity and thus has no proofreading function. The sequence is that of DNA polymerase zeta catalytic subunit (REV3L) from Homo sapiens (Human).